Consider the following 340-residue polypeptide: Phospho-N-acetylmuramoyl-pentapeptide-transferase (340 aa).

10 helical membrane-spanning segments follow: residues 5 to 25 (FILS…HLIN), 50 to 70 (TPTM…IIWT), 73 to 93 (SNPY…IGFI), 113 to 133 (FSLL…IIND), 147 to 167 (IIFN…IGTS), 178 to 198 (GLAI…SFIS), 218 to 238 (LTII…FNTY), 242 to 262 (IFMG…ISVL), 267 to 287 (ILLI…IIQV), and 318 to 338 (IIRF…MLKV).

It belongs to the glycosyltransferase 4 family. MraY subfamily. Requires Mg(2+) as cofactor.

The protein localises to the cell membrane. It catalyses the reaction UDP-N-acetyl-alpha-D-muramoyl-L-alanyl-gamma-D-glutamyl-meso-2,6-diaminopimeloyl-D-alanyl-D-alanine + di-trans,octa-cis-undecaprenyl phosphate = di-trans,octa-cis-undecaprenyl diphospho-N-acetyl-alpha-D-muramoyl-L-alanyl-D-glutamyl-meso-2,6-diaminopimeloyl-D-alanyl-D-alanine + UMP. It functions in the pathway cell wall biogenesis; peptidoglycan biosynthesis. Catalyzes the initial step of the lipid cycle reactions in the biosynthesis of the cell wall peptidoglycan: transfers peptidoglycan precursor phospho-MurNAc-pentapeptide from UDP-MurNAc-pentapeptide onto the lipid carrier undecaprenyl phosphate, yielding undecaprenyl-pyrophosphoryl-MurNAc-pentapeptide, known as lipid I. This Buchnera aphidicola subsp. Baizongia pistaciae (strain Bp) protein is Phospho-N-acetylmuramoyl-pentapeptide-transferase.